A 562-amino-acid polypeptide reads, in one-letter code: MDEVTRTAQRSPSITETHAGETKLAGPGEKEGDVESPVDPSADSEQNRQQITGLQLFAILASVTLSAFLMLLDGSIIGVAIPNITSQFHSIDDIGWYTAAYQLASAALQPLSGKIYSSFSTKWTYLFFFGLFELGSLICGVANSSSMLIGGRAVAGLGSSGLLNGGMTIIAGAVPLEKRPVYTGIYLGISQLGIVCGPLIGGALTEYTTWRWCFYINLPVGAVTAILLLFLQVPELTEKPRFTFALVRRVIPELDLIGFTLFAPAAIMVLLALYYGGNDFPWDSSQVIGLFCGAGVTIIVFALWERRVGDRAMIPPSMVSHRIVYTSAINGAALVASILVAAQYLPIYFQGVRGYGPAMSGVNTLPGILSQLLTVILSGVLVQKVGYYLPFAAAGSAISAVGNGIVTLFSPTTPTAKWIGYQIVLGSGRGIGMQMGIIAIQNLLPPEKISVGIAFMIFCQNFAGAIFVVVGEVIFTQQLVKQIQAHAPSVKVDAALAAGASSSSLRALVPPGSPELQGVLLAFSNSVDRVFYLLMSLSLAGFVAAFGMGWVDTRKKNKSETE.

Positions 1–16 (MDEVTRTAQRSPSITE) are enriched in polar residues. Positions 1-45 (MDEVTRTAQRSPSITETHAGETKLAGPGEKEGDVESPVDPSADSE) are disordered. The helical transmembrane segment at 57–77 (FAILASVTLSAFLMLLDGSII) threads the bilayer. Asn83 carries N-linked (GlcNAc...) asparagine glycosylation. The next 13 helical transmembrane spans lie at 94–113 (IGWY…PLSG), 123–143 (WTYL…GVAN), 154–174 (VAGL…AGAV), 184–204 (GIYL…GGAL), 213–233 (CFYI…FLQV), 256–276 (LIGF…LYYG), 284–304 (SSQV…FALW), 329–349 (INGA…PIYF), 362–382 (VNTL…GVLV), 389–409 (LPFA…VTLF), 418–438 (WIGY…MGII), 451–471 (VGIA…VVVG), and 530–550 (VFYL…GMGW). Residue Asn557 is glycosylated (N-linked (GlcNAc...) asparagine).

Belongs to the major facilitator superfamily. TCR/Tet family.

The protein localises to the cell membrane. Its function is as follows. MFS-type transporter; part of the gene cluster that mediates the biosynthesis of calbistrin A and related compounds. Calbistrin A is a secondary metabolite with an interesting structure that was recently found to have bioactivity against leukemia cells. It consists of two polyketides linked by an ester bond: a bicyclic decalin containing polyketide and a linear 12 carbon dioic acid structure. Required for the secretion of calbistrin A and calbistrin C, as well as of related compounds decumbenone A, B and C. In Penicillium decumbens, this protein is MFS-type transporter calB.